Reading from the N-terminus, the 356-residue chain is MSKEDAMSTGDSTESLDIDCLDDGDSEVVSSLQHLADDKLHISDNRDVAGVASKWTKHGCNSVEIDYIVDIDNNHEDPQLCATLAFDIYKHLRVAETKKRPSTDFVETIQKNIDTSMRAVLIDWLVEVTEEYRLVPETLYLTVNYIDRYLSSKVINRRKMQLLGVACLLIASKYEEICPPQVEELCYISDNTYTKDEVLKMEASVLKYLKFEMTAPTTKCFLRRFLRAAQVCHEAPVLHLEFLANYIAELSLLEYSLICYVPSLIAASSIFLAKFILKPTENPWNSTLSFYTQYKPSDLCNCAKGLHRLFLVGPGGNLRAVREKYSQHKYKFVAKKYSPPSIPAEFFEDPSSYKPD.

Belongs to the cyclin family. Cyclin AB subfamily.

This is Cyclin-A1-4 (CYCA1-4) from Oryza sativa subsp. japonica (Rice).